Reading from the N-terminus, the 747-residue chain is Eukaryotic translation initiation factor 3 subunit B (747 aa).

The RRM domain maps to 42-128 (AFVVVDGLPE…HTLRVNKLTD (87 aa)). WD repeat units lie at residues 195-234 (DRQH…RQRR), 236-292 (AHPF…PLRS), 310-349 (APKF…LLDK), 520-563 (LEKK…EKPE), and 578-623 (ADHY…LREE).

The protein belongs to the eIF-3 subunit B family. As to quaternary structure, component of the eukaryotic translation initiation factor 3 (eIF-3) complex.

It is found in the cytoplasm. RNA-binding component of the eukaryotic translation initiation factor 3 (eIF-3) complex, which is involved in protein synthesis of a specialized repertoire of mRNAs and, together with other initiation factors, stimulates binding of mRNA and methionyl-tRNAi to the 40S ribosome. The eIF-3 complex specifically targets and initiates translation of a subset of mRNAs involved in cell proliferation. This is Eukaryotic translation initiation factor 3 subunit B (prt-1) from Neurospora crassa (strain ATCC 24698 / 74-OR23-1A / CBS 708.71 / DSM 1257 / FGSC 987).